A 361-amino-acid polypeptide reads, in one-letter code: Phenylalanine--tRNA ligase alpha subunit (361 aa).

Residue glutamate 260 participates in Mg(2+) binding.

The protein belongs to the class-II aminoacyl-tRNA synthetase family. Phe-tRNA synthetase alpha subunit type 1 subfamily. Tetramer of two alpha and two beta subunits. The cofactor is Mg(2+).

It is found in the cytoplasm. It catalyses the reaction tRNA(Phe) + L-phenylalanine + ATP = L-phenylalanyl-tRNA(Phe) + AMP + diphosphate + H(+). The sequence is that of Phenylalanine--tRNA ligase alpha subunit from Bartonella henselae (strain ATCC 49882 / DSM 28221 / CCUG 30454 / Houston 1) (Rochalimaea henselae).